A 615-amino-acid chain; its full sequence is Pre-hexon-linking protein IIIa (615 aa).

The interval 1-92 (MDPGLKPSSS…DLLIRVHKYN (92 aa)) is peripentonal hexon-tethering domain. Positions 124–238 (SNQVILNDFL…FTNENTFTPD (115 aa)) are binding to hexon-linking protein. Ser-212 carries the phosphoserine; by host modification. At Thr-262 the chain carries Phosphothreonine; by host. Residues 400–409 (EREALEEAGP) are compositionally biased toward basic and acidic residues. Disordered stretches follow at residues 400–473 (EREA…SVDS) and 528–615 (GERI…NGLK). Low complexity-rich tracts occupy residues 419-430 (PSSSPQSSKIQS) and 451-460 (SVRSAPPSVS). Residue Ser-451 is modified to Phosphoserine; by host. Residues 539 to 548 (RAEIERRRIA) show a composition bias toward basic and acidic residues. Low complexity predominate over residues 557-570 (PSLSSESSAPSLSS). A propeptide spanning residues 602-615 (GNPFDYLRPRNGLK) is cleaved from the precursor.

Belongs to the adenoviridae hexon-linking protein IIIa family. Interacts with hexon proteins; this interaction tethers the peripentonal hexons to hexons situated in the facet. Interacts with the penton protein (via N-terminus). Interacts with packaging protein 3; this interaction is required to promote correct genome packaging. Post-translationally, cleaved near the C-terminus by the viral protease during virion maturation to form the mature protein.

It localises to the virion. Its subcellular location is the host nucleus. In terms of biological role, structural component of the virion that acts as a cement protein on the capsid exterior which mediates the interactions between the hexons, including the peripentonal hexons, and reaches all the way to the penton vertices. Two hexon linking proteins IIIa, one from each facet, stabilize the unique edge interface between a pair of facets. As the virus enters the host cell, hexon linking proteins IIIa are shed concomitant with virion acidification in the endosome. During virus assembly, seems to play a role in the serotype specificity of the packaging of viral DNA via its interaction with packaging protein 3. This chain is Pre-hexon-linking protein IIIa, found in Snake adenovirus serotype 1 (SnAdV-1).